Reading from the N-terminus, the 926-residue chain is LPS-assembly protein LptD (926 aa).

Residues 1–22 (MALKSPAFRKKFPLLVTGSLLA) form the signal peptide. A disordered region spans residues 58 to 99 (VDLPPRPVHDTTSVSSNGTVTSQSTSSGEQVAGTQLVTEAKG). The segment covering 68–85 (TTSVSSNGTVTSQSTSSG) has biased composition (low complexity).

This sequence belongs to the LptD family. Component of the lipopolysaccharide transport and assembly complex. Interacts with LptE and LptA.

The protein resides in the cell outer membrane. Functionally, together with LptE, is involved in the assembly of lipopolysaccharide (LPS) at the surface of the outer membrane. The sequence is that of LPS-assembly protein LptD from Pseudomonas savastanoi pv. phaseolicola (strain 1448A / Race 6) (Pseudomonas syringae pv. phaseolicola (strain 1448A / Race 6)).